The primary structure comprises 68 residues: Small ribosomal subunit protein bS21 (68 aa).

This sequence belongs to the bacterial ribosomal protein bS21 family.

The polypeptide is Small ribosomal subunit protein bS21 (Ruegeria sp. (strain TM1040) (Silicibacter sp.)).